The chain runs to 257 residues: Acetylglutamate kinase (257 aa).

Substrate contacts are provided by residues 43 to 44 (GG), R65, and N157. ATP is bound by residues 180–185 (DVSGIL) and 208–210 (IIT).

Belongs to the acetylglutamate kinase family. ArgB subfamily. In terms of assembly, homodimer.

It localises to the cytoplasm. It carries out the reaction N-acetyl-L-glutamate + ATP = N-acetyl-L-glutamyl 5-phosphate + ADP. It functions in the pathway amino-acid biosynthesis; L-arginine biosynthesis; N(2)-acetyl-L-ornithine from L-glutamate: step 2/4. Its function is as follows. Catalyzes the ATP-dependent phosphorylation of N-acetyl-L-glutamate. The protein is Acetylglutamate kinase of Salmonella agona (strain SL483).